The following is a 421-amino-acid chain: Serine--tRNA ligase (421 aa).

An L-serine-binding site is contributed by 225–227; sequence TAE. Residues 256–258 and Val-272 contribute to the ATP site; that span reads RSE. Glu-279 serves as a coordination point for L-serine. Residue 345 to 348 coordinates ATP; sequence ETHS. L-serine is bound at residue Thr-380.

The protein belongs to the class-II aminoacyl-tRNA synthetase family. Type-1 seryl-tRNA synthetase subfamily. In terms of assembly, homodimer. A single tRNA molecule binds across the dimer.

The protein localises to the cytoplasm. It catalyses the reaction tRNA(Ser) + L-serine + ATP = L-seryl-tRNA(Ser) + AMP + diphosphate + H(+). It carries out the reaction tRNA(Sec) + L-serine + ATP = L-seryl-tRNA(Sec) + AMP + diphosphate + H(+). Its pathway is aminoacyl-tRNA biosynthesis; selenocysteinyl-tRNA(Sec) biosynthesis; L-seryl-tRNA(Sec) from L-serine and tRNA(Sec): step 1/1. Its function is as follows. Catalyzes the attachment of serine to tRNA(Ser). Is also probably able to aminoacylate tRNA(Sec) with serine, to form the misacylated tRNA L-seryl-tRNA(Sec), which will be further converted into selenocysteinyl-tRNA(Sec). This chain is Serine--tRNA ligase (serS), found in Thermus thermophilus (strain ATCC BAA-163 / DSM 7039 / HB27).